A 503-amino-acid chain; its full sequence is ESX-5 secretion system protein EccD5 (503 aa).

Transmembrane regions (helical) follow at residues 137–157, 169–189, 200–220, 224–244, 250–270, 272–292, 359–379, 414–434, 443–463, and 480–500; these read VVAV…ASGV, LTTI…MMLL, VADI…ASAP, VGSP…ALAL, RLAI…ASLS, MVAA…CVVM, FLSG…TSLC, ITLA…YALV, IVAS…AVVP, and YLCL…YAAI.

The protein belongs to the EccD/Snm4 family. Part of the ESX-5 / type VII secretion system (T7SS), which is composed of cytosolic and membrane components. The ESX-5 membrane complex is composed of EccB5, EccC5, EccD5 and EccE5.

The protein resides in the cell inner membrane. Its function is as follows. Part of the ESX-5 specialized secretion system, which is responsible for the secretion of EsxN and a number of PE_PGRS and PPE proteins. This component is essential for ESX-5 complex stability and secretion. The sequence is that of ESX-5 secretion system protein EccD5 from Mycobacterium marinum (strain ATCC BAA-535 / M).